A 120-amino-acid polypeptide reads, in one-letter code: NAD(P)H-quinone oxidoreductase subunit 3, chloroplastic (120 aa).

3 consecutive transmembrane segments (helical) span residues 9-29 (IFWA…LISG), 64-84 (MFAL…PWAM), and 88-108 (VLGV…IVGL).

Belongs to the complex I subunit 3 family. As to quaternary structure, NDH is composed of at least 16 different subunits, 5 of which are encoded in the nucleus.

The protein resides in the plastid. It localises to the chloroplast thylakoid membrane. The enzyme catalyses a plastoquinone + NADH + (n+1) H(+)(in) = a plastoquinol + NAD(+) + n H(+)(out). The catalysed reaction is a plastoquinone + NADPH + (n+1) H(+)(in) = a plastoquinol + NADP(+) + n H(+)(out). NDH shuttles electrons from NAD(P)H:plastoquinone, via FMN and iron-sulfur (Fe-S) centers, to quinones in the photosynthetic chain and possibly in a chloroplast respiratory chain. The immediate electron acceptor for the enzyme in this species is believed to be plastoquinone. Couples the redox reaction to proton translocation, and thus conserves the redox energy in a proton gradient. In Populus alba (White poplar), this protein is NAD(P)H-quinone oxidoreductase subunit 3, chloroplastic.